The sequence spans 359 residues: MSTPHHILVGISGGVDSAVATCLLVQQGYRVTAVNLRLLDTLDAPYAEPTLQPSSLVVSDHPDYHIPLFSLNLSRTFRDEVMRYFNAEYLAGRTPNPCMVCNRQVKWAGLRHAAELIGANAIATGHYANRAFSDGRYRLYKGADSQKDQSYFLWMLSQKDLAHTLLPLGGLTKPEVRELAKNFGVRAAEKKESQEICFVPNDDYSTYLMSAMPELAERVADGDIVDAAGTVIGKHRGYPFYTIGQRRGLGVSAKEPLYVTALDAEQNRIHVGHKAALMSHRLLASRCNWIGMEPPSSSVELLGRIRYRDRQTACRVTPLENGQIEVVFQEPKSAITPGQAVVFYCGDEVLGGGFIEEGT.

ATP contacts are provided by residues Gly10–Ser17 and Leu36. The active-site Nucleophile is the Cys101. Cys101 and Cys197 are disulfide-bonded. Gly125 serves as a coordination point for ATP. The tract at residues Lys147–Gln149 is interaction with tRNA. Catalysis depends on Cys197, which acts as the Cysteine persulfide intermediate. The interaction with tRNA stretch occupies residues Arg306–Tyr307.

This sequence belongs to the MnmA/TRMU family.

Its subcellular location is the cytoplasm. It catalyses the reaction S-sulfanyl-L-cysteinyl-[protein] + uridine(34) in tRNA + AH2 + ATP = 2-thiouridine(34) in tRNA + L-cysteinyl-[protein] + A + AMP + diphosphate + H(+). Catalyzes the 2-thiolation of uridine at the wobble position (U34) of tRNA, leading to the formation of s(2)U34. In Chlorobium chlorochromatii (strain CaD3), this protein is tRNA-specific 2-thiouridylase MnmA.